The chain runs to 382 residues: Lactaldehyde reductase (382 aa).

NAD(+)-binding positions include D38, N70, 97–98, 139–143, N150, K161, and 180–184; these read GS, TTAGT, and MMDGM. 4 residues coordinate Fe cation: D195, H199, H262, and H276.

Belongs to the iron-containing alcohol dehydrogenase family. As to quaternary structure, homodimer. Requires Fe cation as cofactor.

It catalyses the reaction (R)-propane-1,2-diol + NAD(+) = (R)-lactaldehyde + NADH + H(+). The catalysed reaction is (S)-propane-1,2-diol + NAD(+) = (S)-lactaldehyde + NADH + H(+). It functions in the pathway carbohydrate degradation; L-fucose degradation. This Escherichia coli O157:H7 protein is Lactaldehyde reductase (fucO).